The sequence spans 152 residues: ALK and LTK ligand 2 (152 aa).

The signal sequence occupies residues 1–24 (MRGPGHPLLLGLLLVLGAAGRGRG). 2 cysteine pairs are disulfide-bonded: Cys-111–Cys-147 and Cys-125–Cys-134.

The protein belongs to the ALKAL family. In terms of assembly, homodimer; interchain disulfide bond is not required for homodimerization. Widely expressed with highest levels in adrenal gland and modest levels in pancreas, testis and uterus.

Its subcellular location is the secreted. It localises to the cell membrane. Its function is as follows. Cytokine that acts as a physiological ligand for receptor tyrosine kinases LTK and ALK, leading to their activation. Cytokine-binding is sufficient to activate LTK. In contrast, ALKAL2-driven activation of ALK is coupled with heparin-binding to ALK. Stimulation of ALK signaling is involved in neural development and regulation of energy expenditure. The protein is ALK and LTK ligand 2 of Homo sapiens (Human).